The chain runs to 273 residues: Glutamate racemase (273 aa).

Substrate contacts are provided by residues 11–12 and 43–44; these read DS and YG. The active-site Proton donor/acceptor is Cys-74. 75–76 contributes to the substrate binding site; the sequence is NT. Catalysis depends on Cys-185, which acts as the Proton donor/acceptor. A substrate-binding site is contributed by 186–187; the sequence is TH.

Belongs to the aspartate/glutamate racemases family.

The catalysed reaction is L-glutamate = D-glutamate. It participates in cell wall biogenesis; peptidoglycan biosynthesis. Provides the (R)-glutamate required for cell wall biosynthesis. The protein is Glutamate racemase of Lactiplantibacillus plantarum (strain ATCC BAA-793 / NCIMB 8826 / WCFS1) (Lactobacillus plantarum).